A 183-amino-acid polypeptide reads, in one-letter code: Porphobilinogen deaminase (183 aa).

It belongs to the HMBS family. Monomer. The cofactor is dipyrromethane.

It catalyses the reaction 4 porphobilinogen + H2O = hydroxymethylbilane + 4 NH4(+). It participates in porphyrin-containing compound metabolism; protoporphyrin-IX biosynthesis; coproporphyrinogen-III from 5-aminolevulinate: step 2/4. Tetrapolymerization of the monopyrrole PBG into the hydroxymethylbilane pre-uroporphyrinogen in several discrete steps. The protein is Porphobilinogen deaminase (hemC) of Yersinia intermedia.